The primary structure comprises 592 residues: Beta-fructofuranosidase, insoluble isoenzyme 1 (592 aa).

The first 39 residues, 1–39 (MGVTIRNRNYDHGSLPFLQSLLAILLVTTTTLHINGVEA), serve as a signal peptide directing secretion. The propeptide occupies 40–48 (FHEIHYNLQ). Asp-74 is an active-site residue. An N-linked (GlcNAc...) (complex) asparagine glycan is attached at Asn-170. A glycan (N-linked (GlcNAc...) asparagine) is linked at Asn-195. Residue Asn-311 is glycosylated (N-linked (GlcNAc...) (complex) asparagine). Residue Asn-348 is glycosylated (N-linked (GlcNAc...) (high mannose) asparagine). N-linked (GlcNAc...) asparagine glycosylation occurs at Asn-570.

This sequence belongs to the glycosyl hydrolase 32 family. In leaves and roots of young plants.

It is found in the secreted. Its subcellular location is the cell wall. It catalyses the reaction Hydrolysis of terminal non-reducing beta-D-fructofuranoside residues in beta-D-fructofuranosides.. Its function is as follows. May play an important role in phloem unloading and in stress response. This Daucus carota (Wild carrot) protein is Beta-fructofuranosidase, insoluble isoenzyme 1 (INV1).